The sequence spans 231 residues: Ribonuclease 3 (231 aa).

In terms of domain architecture, RNase III spans 12–139 (LKAFLQKNNI…LIAAIYLDQG (128 aa)). Residue E52 coordinates Mg(2+). The active site involves D56. Residues D125 and E128 each coordinate Mg(2+). Residue E128 is part of the active site. A DRBM domain is found at 165-231 (DPKSELQEYF…AANALSKLKT (67 aa)).

This sequence belongs to the ribonuclease III family. As to quaternary structure, homodimer. Requires Mg(2+) as cofactor.

It localises to the cytoplasm. The catalysed reaction is Endonucleolytic cleavage to 5'-phosphomonoester.. Its function is as follows. Digests double-stranded RNA. Involved in the processing of primary rRNA transcript to yield the immediate precursors to the large and small rRNAs (23S and 16S). Processes some mRNAs, and tRNAs when they are encoded in the rRNA operon. Processes pre-crRNA and tracrRNA of type II CRISPR loci if present in the organism. The polypeptide is Ribonuclease 3 (Mycoplasmopsis synoviae (strain 53) (Mycoplasma synoviae)).